A 147-amino-acid chain; its full sequence is uncharacterized protein (147 aa).

This is an uncharacterized protein from Gallid herpesvirus 2 (strain Chicken/Md5/ATCC VR-987) (GaHV-2).